Here is a 255-residue protein sequence, read N- to C-terminus: Large ribosomal subunit protein uL2 (255 aa).

The disordered stretch occupies residues 211-235 (PHGGGNHQHVGHATTTKRDDPAGKK).

Belongs to the universal ribosomal protein uL2 family.

The chain is Large ribosomal subunit protein uL2 (rpl8) from Dictyostelium discoideum (Social amoeba).